Consider the following 254-residue polypeptide: MKTVDLNCDMGESFGAYQLGNDQEILSYITSANVACGFHAGDPATMRKTVQMALKAGVAIGAHPGFADLVGFGRRNMEISPEEAYDLVVYQIGALQAFVRAEGGVMHHVKPHGALYNMAATRPALAESIALAIYKVNPELVLYGLAGSELTRAGEKIGLITAHEVFADRTYQQDGTLTPRSQPNAIISDQQQSLQQVIRMVSDGRVLTQQGVDIPIRADSICIHGDGAHALAFAQSIREALSGAGITIAARFAR.

Belongs to the LamB/PxpA family. As to quaternary structure, forms a complex composed of PxpA, PxpB and PxpC.

It carries out the reaction 5-oxo-L-proline + ATP + 2 H2O = L-glutamate + ADP + phosphate + H(+). Catalyzes the cleavage of 5-oxoproline to form L-glutamate coupled to the hydrolysis of ATP to ADP and inorganic phosphate. The chain is 5-oxoprolinase subunit A from Brevibacillus brevis (strain 47 / JCM 6285 / NBRC 100599).